Here is a 155-residue protein sequence, read N- to C-terminus: SsrA-binding protein (155 aa).

It belongs to the SmpB family.

It is found in the cytoplasm. Functionally, required for rescue of stalled ribosomes mediated by trans-translation. Binds to transfer-messenger RNA (tmRNA), required for stable association of tmRNA with ribosomes. tmRNA and SmpB together mimic tRNA shape, replacing the anticodon stem-loop with SmpB. tmRNA is encoded by the ssrA gene; the 2 termini fold to resemble tRNA(Ala) and it encodes a 'tag peptide', a short internal open reading frame. During trans-translation Ala-aminoacylated tmRNA acts like a tRNA, entering the A-site of stalled ribosomes, displacing the stalled mRNA. The ribosome then switches to translate the ORF on the tmRNA; the nascent peptide is terminated with the 'tag peptide' encoded by the tmRNA and targeted for degradation. The ribosome is freed to recommence translation, which seems to be the essential function of trans-translation. The polypeptide is SsrA-binding protein (Bordetella parapertussis (strain 12822 / ATCC BAA-587 / NCTC 13253)).